We begin with the raw amino-acid sequence, 140 residues long: Thioredoxin H9 (140 aa).

G2 is lipidated: N-myristoyl glycine. A lipid anchor (S-palmitoyl cysteine) is attached at C4. Position 14 is a phosphoserine (S14). Positions 25–129 constitute a Thioredoxin domain; sequence VHLITTKESW…PELQKKVTSI (105 aa). Active-site nucleophile residues include C57 and C60. A disulfide bridge connects residues C57 and C60. A Phosphoserine modification is found at S136.

This sequence belongs to the thioredoxin family. Plant H-type subfamily. Ubiquitous.

The protein localises to the cell membrane. Functionally, probable thiol-disulfide oxidoreductase that may play a role in intercellular communication due to its ability to move from cell to cell. The chain is Thioredoxin H9 (TRX9) from Arabidopsis thaliana (Mouse-ear cress).